The chain runs to 242 residues: Argininosuccinate synthase (242 aa).

It belongs to the argininosuccinate synthase family. Type 2 subfamily. Homotetramer.

Its subcellular location is the cytoplasm. It catalyses the reaction L-citrulline + L-aspartate + ATP = 2-(N(omega)-L-arginino)succinate + AMP + diphosphate + H(+). It participates in amino-acid biosynthesis; L-arginine biosynthesis; L-arginine from L-ornithine and carbamoyl phosphate: step 2/3. The sequence is that of Argininosuccinate synthase (argG) from Dickeya chrysanthemi (Pectobacterium chrysanthemi).